The chain runs to 344 residues: Anthranilate phosphoribosyltransferase (344 aa).

5-phospho-alpha-D-ribose 1-diphosphate is bound by residues Gly86, 89–90 (GD), Thr94, 96–99 (NIST), 114–122 (KHGNKSASG), and Ser126. Position 86 (Gly86) interacts with anthranilate. Position 98 (Ser98) interacts with Mg(2+). Anthranilate is bound at residue Asn117. Arg172 is an anthranilate binding site. Positions 231 and 232 each coordinate Mg(2+).

This sequence belongs to the anthranilate phosphoribosyltransferase family. In terms of assembly, homodimer. It depends on Mg(2+) as a cofactor.

It carries out the reaction N-(5-phospho-beta-D-ribosyl)anthranilate + diphosphate = 5-phospho-alpha-D-ribose 1-diphosphate + anthranilate. The protein operates within amino-acid biosynthesis; L-tryptophan biosynthesis; L-tryptophan from chorismate: step 2/5. Catalyzes the transfer of the phosphoribosyl group of 5-phosphorylribose-1-pyrophosphate (PRPP) to anthranilate to yield N-(5'-phosphoribosyl)-anthranilate (PRA). This chain is Anthranilate phosphoribosyltransferase, found in Prochlorococcus marinus (strain AS9601).